The following is a 216-amino-acid chain: ATP phosphoribosyltransferase (216 aa).

It belongs to the ATP phosphoribosyltransferase family. Short subfamily. As to quaternary structure, heteromultimer composed of HisG and HisZ subunits.

It is found in the cytoplasm. It catalyses the reaction 1-(5-phospho-beta-D-ribosyl)-ATP + diphosphate = 5-phospho-alpha-D-ribose 1-diphosphate + ATP. The protein operates within amino-acid biosynthesis; L-histidine biosynthesis; L-histidine from 5-phospho-alpha-D-ribose 1-diphosphate: step 1/9. Functionally, catalyzes the condensation of ATP and 5-phosphoribose 1-diphosphate to form N'-(5'-phosphoribosyl)-ATP (PR-ATP). Has a crucial role in the pathway because the rate of histidine biosynthesis seems to be controlled primarily by regulation of HisG enzymatic activity. This chain is ATP phosphoribosyltransferase, found in Nitrosomonas eutropha (strain DSM 101675 / C91 / Nm57).